A 572-amino-acid chain; its full sequence is FAD-linked oxidoreductase patO (572 aa).

An N-terminal signal peptide occupies residues 1 to 23 (MRLSIYSSILLLRAMCLVRPTFG). Asn-48, Asn-71, Asn-126, Asn-180, Asn-309, Asn-354, Asn-381, Asn-422, Asn-446, and Asn-481 each carry an N-linked (GlcNAc...) asparagine glycan. The region spanning 115-295 (CAPGDMVVYS…YSMTVKAFPD (181 aa)) is the FAD-binding PCMH-type domain.

The protein belongs to the oxygen-dependent FAD-linked oxidoreductase family. FAD is required as a cofactor.

Its subcellular location is the vacuole lumen. It participates in mycotoxin biosynthesis; patulin biosynthesis. FAD-linked oxidoreductase; part of the gene cluster that mediates the biosynthesis of patulin, an acetate-derived tetraketide mycotoxin produced by several fungal species that shows antimicrobial properties against several bacteria. PatO acts with patJ in the vacuole to convert gentisyl alcohol to isoepoxydon. The pathway begins with the synthesis of 6-methylsalicylic acid by the polyketide synthase (PKS) patK via condensation of acetate and malonate units. The 6-methylsalicylic acid decarboxylase patG then catalyzes the decarboxylation of 6-methylsalicylic acid to yield m-cresol (also known as 3-methylphenol). These first reactions occur in the cytosol. The intermediate m-cresol is then transported into the endoplasmic reticulum where the cytochrome P450 monooxygenase patH converts it to m-hydroxybenzyl alcohol, which is further converted to gentisyl alcohol by the cytochrome P450 monooxygenase patI. The oxidoreductases patJ and patO further convert gentisyl alcohol to isoepoxydon in the vacuole. PatN catalyzes then the transformation of isoepoxydon into phyllostine. The cluster protein patF is responsible for the conversion from phyllostine to neopatulin whereas the alcohol dehydrogenase patD converts neopatulin to E-ascladiol. The steps between isoepoxydon and E-ascladiol occur in the cytosol, and E-ascladiol is probably secreted to the extracellular space by one of the cluster-specific transporters patC or patM. Finally, the secreted patulin synthase patE catalyzes the conversion of E-ascladiol to patulin. This chain is FAD-linked oxidoreductase patO, found in Aspergillus clavatus (strain ATCC 1007 / CBS 513.65 / DSM 816 / NCTC 3887 / NRRL 1 / QM 1276 / 107).